A 372-amino-acid chain; its full sequence is Alanine dehydrogenase (372 aa).

Residues R15 and K75 each contribute to the substrate site. The active-site Proton donor/acceptor is H96. Residues S134, 178-179 (TA), D198, S220, 239-240 (VL), 266-269 (IAID), R279, and 298-301 (VANM) each bind NAD(+). Residue D269 is the Proton donor/acceptor of the active site.

Belongs to the AlaDH/PNT family. In terms of assembly, homohexamer.

The protein localises to the cytoplasm. The catalysed reaction is L-alanine + NAD(+) + H2O = pyruvate + NH4(+) + NADH + H(+). The protein operates within amino-acid degradation; L-alanine degradation via dehydrogenase pathway; NH(3) and pyruvate from L-alanine: step 1/1. Its function is as follows. Catalyzes the reversible reductive amination of pyruvate to L-alanine. A key factor in the assimilation of L-alanine as an energy source via the tricarboxylic acid cycle during sporulation. The protein is Alanine dehydrogenase (ald) of Geobacillus stearothermophilus (Bacillus stearothermophilus).